A 174-amino-acid chain; its full sequence is Peptide methionine sulfoxide reductase MsrA (174 aa).

Cys-11 is an active-site residue.

The protein belongs to the MsrA Met sulfoxide reductase family.

It catalyses the reaction L-methionyl-[protein] + [thioredoxin]-disulfide + H2O = L-methionyl-(S)-S-oxide-[protein] + [thioredoxin]-dithiol. The catalysed reaction is [thioredoxin]-disulfide + L-methionine + H2O = L-methionine (S)-S-oxide + [thioredoxin]-dithiol. In terms of biological role, has an important function as a repair enzyme for proteins that have been inactivated by oxidation. Catalyzes the reversible oxidation-reduction of methionine sulfoxide in proteins to methionine. This is Peptide methionine sulfoxide reductase MsrA from Nitratiruptor sp. (strain SB155-2).